Reading from the N-terminus, the 289-residue chain is Cbb3-type cytochrome c oxidase subunit FixP (289 aa).

At 1–33 the chain is on the cytoplasmic side; that stretch reads MADKHKHVDEVSGVETTGHEWDGIRELNNPMPR. The chain crosses the membrane as a helical span at residues 34–56; that stretch reads WWVYSFYATIIWAIGYAIAYPSW. Residues 57–289 are Periplasmic-facing; that stretch reads PMLTEATKGM…VFVHSLGGGE (233 aa). Cytochrome c domains lie at 110-198 and 205-286; these read FAVS…VSLT and HLVQ…HSLG. Heme c contacts are provided by Cys123, Cys126, His127, Met175, Cys218, Cys221, His222, and Met263.

The protein belongs to the CcoP / FixP family. In terms of assembly, component of the cbb3-type cytochrome c oxidase at least composed of FixN, FixO, FixQ and FixP. The cofactor is heme c.

Its subcellular location is the cell inner membrane. Its pathway is energy metabolism; oxidative phosphorylation. Its function is as follows. C-type cytochrome. Part of the cbb3-type cytochrome c oxidase complex. FixP subunit is required for transferring electrons from donor cytochrome c via its heme groups to FixO subunit. From there, electrons are shuttled to the catalytic binuclear center of FixN subunit where oxygen reduction takes place. The complex also functions as a proton pump. The chain is Cbb3-type cytochrome c oxidase subunit FixP from Rhizobium meliloti (strain 1021) (Ensifer meliloti).